A 216-amino-acid chain; its full sequence is Protein-L-isoaspartate O-methyltransferase (216 aa).

Residue S61 is part of the active site.

This sequence belongs to the methyltransferase superfamily. L-isoaspartyl/D-aspartyl protein methyltransferase family.

The protein localises to the cytoplasm. It carries out the reaction [protein]-L-isoaspartate + S-adenosyl-L-methionine = [protein]-L-isoaspartate alpha-methyl ester + S-adenosyl-L-homocysteine. In terms of biological role, catalyzes the methyl esterification of L-isoaspartyl residues in peptides and proteins that result from spontaneous decomposition of normal L-aspartyl and L-asparaginyl residues. It plays a role in the repair and/or degradation of damaged proteins. The polypeptide is Protein-L-isoaspartate O-methyltransferase (Geobacter metallireducens (strain ATCC 53774 / DSM 7210 / GS-15)).